The following is a 315-amino-acid chain: Malate dehydrogenase (315 aa).

NAD(+) is bound by residues 10–15 (GAGNVG) and Asp34. Residues Arg85 and Arg91 each contribute to the substrate site. NAD(+) contacts are provided by residues Asn98 and 121–123 (VSN). The substrate site is built by Asn123 and Arg154. Catalysis depends on His178, which acts as the Proton acceptor.

Belongs to the LDH/MDH superfamily. MDH type 3 family.

The catalysed reaction is (S)-malate + NAD(+) = oxaloacetate + NADH + H(+). In terms of biological role, catalyzes the reversible oxidation of malate to oxaloacetate. This Rhodopirellula baltica (strain DSM 10527 / NCIMB 13988 / SH1) protein is Malate dehydrogenase.